Here is a 289-residue protein sequence, read N- to C-terminus: Diaminopimelate epimerase (289 aa).

Positions 11 and 78 each coordinate substrate. Cys-87 (proton donor) is an active-site residue. Residues 88–89, Asn-163, Asn-199, and 217–218 contribute to the substrate site; these read GN and ER. Cys-226 serves as the catalytic Proton acceptor. 227–228 contacts substrate; that stretch reads GT.

The protein belongs to the diaminopimelate epimerase family. As to quaternary structure, homodimer.

Its subcellular location is the cytoplasm. The enzyme catalyses (2S,6S)-2,6-diaminopimelate = meso-2,6-diaminopimelate. The protein operates within amino-acid biosynthesis; L-lysine biosynthesis via DAP pathway; DL-2,6-diaminopimelate from LL-2,6-diaminopimelate: step 1/1. In terms of biological role, catalyzes the stereoinversion of LL-2,6-diaminopimelate (L,L-DAP) to meso-diaminopimelate (meso-DAP), a precursor of L-lysine and an essential component of the bacterial peptidoglycan. The chain is Diaminopimelate epimerase from Mycolicibacterium vanbaalenii (strain DSM 7251 / JCM 13017 / BCRC 16820 / KCTC 9966 / NRRL B-24157 / PYR-1) (Mycobacterium vanbaalenii).